Here is a 46-residue protein sequence, read N- to C-terminus: MPCLYICGECGAEHEIKPKEPVKCKDCTHRIMYKKRTDKMIQFEAR.

Residues C7, C10, C24, and C27 each contribute to the Zn(2+) site. The C4-type zinc finger occupies 7–27 (CGECGAEHEIKPKEPVKCKDC).

The protein belongs to the archaeal Rpo12/eukaryotic RPC10 RNA polymerase subunit family. As to quaternary structure, component of the RNA polymerase I (Pol I), RNA polymerase II (Pol II) and RNA polymerase III (Pol III) complexes consisting of at least 13, 12 and 17 subunits, respectively.

Its subcellular location is the nucleus. Its function is as follows. DNA-dependent RNA polymerase catalyzes the transcription of DNA into RNA using the four ribonucleoside triphosphates as substrates. Common component of RNA polymerases I, II and III which synthesize ribosomal RNA precursors, mRNA precursors and many functional non-coding RNAs, and a small RNAs, such as 5S rRNA and tRNAs, respectively. The sequence is that of DNA-directed RNA polymerases I, II, and III subunit rpabc4 (polr2k) from Dictyostelium discoideum (Social amoeba).